We begin with the raw amino-acid sequence, 349 residues long: DNA replication and repair protein RecF (349 aa).

30 to 37 (GKNGSGKT) contributes to the ATP binding site.

The protein belongs to the RecF family.

It is found in the cytoplasm. Its function is as follows. The RecF protein is involved in DNA metabolism; it is required for DNA replication and normal SOS inducibility. RecF binds preferentially to single-stranded, linear DNA. It also seems to bind ATP. The chain is DNA replication and repair protein RecF from Francisella tularensis subsp. novicida (strain U112).